The following is an 86-amino-acid chain: Muscarinic toxin-like protein (86 aa).

Residues 1-21 (MKTLLLTLAVVTMVCMDLGYT) form the signal peptide. Disulfide bonds link Cys24/Cys45, Cys38/Cys62, Cys66/Cys78, and Cys79/Cys84.

It belongs to the three-finger toxin family. Short-chain subfamily. Orphan group VIII (haditoxin) sub-subfamily. As to quaternary structure, homodimer; non-covalently linked. Expressed by the venom gland.

It localises to the secreted. Antagonist of muscle and neuronal nicotinic acetylcholine receptors (nAChR) with highest affinity for neuronal alpha-7/CHRNA7 nAChRs. This chain is Muscarinic toxin-like protein, found in Bungarus multicinctus (Many-banded krait).